Consider the following 704-residue polypeptide: Elongation factor G (704 aa).

Positions 10-290 (TKVRNIGIMA…AVVDYLPSPL (281 aa)) constitute a tr-type G domain. GTP contacts are provided by residues 19 to 26 (AHIDAGKT), 83 to 87 (DTPGH), and 137 to 140 (NKMD).

It belongs to the TRAFAC class translation factor GTPase superfamily. Classic translation factor GTPase family. EF-G/EF-2 subfamily.

It is found in the cytoplasm. Catalyzes the GTP-dependent ribosomal translocation step during translation elongation. During this step, the ribosome changes from the pre-translocational (PRE) to the post-translocational (POST) state as the newly formed A-site-bound peptidyl-tRNA and P-site-bound deacylated tRNA move to the P and E sites, respectively. Catalyzes the coordinated movement of the two tRNA molecules, the mRNA and conformational changes in the ribosome. The chain is Elongation factor G from Beutenbergia cavernae (strain ATCC BAA-8 / DSM 12333 / CCUG 43141 / JCM 11478 / NBRC 16432 / NCIMB 13614 / HKI 0122).